We begin with the raw amino-acid sequence, 115 residues long: RRPARSGGDGGAPMTTGSRVVKYYDGSRRGSRRGLSTSGRSVKKDPAGLRDSLLSEDDRSAAAAPPPPPVHPVRDQLSSQLVRPSRGLGAYRTMSVFGSGWRPCRAAASHVRGAR.

Residues 1–86 (RRPARSGGDG…LSSQLVRPSR (86 aa)) form a disordered region.

This is an uncharacterized protein from Homo sapiens (Human).